Reading from the N-terminus, the 216-residue chain is MLEIFDVSYEELMDMRSDDLYRLRKKTFKDRLQWAVNCSNDMEFDEYDNPNTRYLLGIYGNQLICSVRFIELHRPNMITHTFNAQFDDIILPEGNYIESSRFFVDKSGAKTLLGNRYPISYVLFLAVINYTRHHKHTGIYTIVSRAMLTILKRSGWQFDVIKEAFVSEKERIYLLRLPVDKHNQALLASQVNQVLQGSDSALLAWPISLPVIPELV.

Belongs to the autoinducer synthase family.

The enzyme catalyses a fatty acyl-[ACP] + S-adenosyl-L-methionine = an N-acyl-L-homoserine lactone + S-methyl-5'-thioadenosine + holo-[ACP] + H(+). Required for the synthesis of an acyl-HSL autoinducer that binds to YukR and which is involved in the regulation of motility and morphology. The protein is Acyl-homoserine-lactone synthase (yukI) of Yersinia ruckeri.